The following is a 71-amino-acid chain: Exodeoxyribonuclease 7 small subunit (71 aa).

This sequence belongs to the XseB family. As to quaternary structure, heterooligomer composed of large and small subunits.

The protein localises to the cytoplasm. The enzyme catalyses Exonucleolytic cleavage in either 5'- to 3'- or 3'- to 5'-direction to yield nucleoside 5'-phosphates.. Bidirectionally degrades single-stranded DNA into large acid-insoluble oligonucleotides, which are then degraded further into small acid-soluble oligonucleotides. This Streptococcus equi subsp. zooepidemicus (strain H70) protein is Exodeoxyribonuclease 7 small subunit.